The following is a 433-amino-acid chain: C2H2 type master regulator of conidiophore development brlA (433 aa).

3 disordered regions span residues 24-49 (SDCP…LYSQ), 240-269 (KSHT…ISGH), and 286-306 (MMQR…LRSN). The segment covering 30–49 (TSSFSPLDSPTPTPTSLYSQ) has biased composition (low complexity). Residues 240-264 (KSHTPSTPHRSVSMGTPSGSDTPVS) show a composition bias toward polar residues. Residues 288-302 (QRHRQPSRKPSKKQL) show a composition bias toward basic residues. C2H2-type zinc fingers lie at residues 321–345 (FKCK…MKSH) and 351–376 (HVCW…TKTH). The segment at 391–423 (ETSQDFDPDFRGQLTPDGRPIYGSKLEDSMPDC) is disordered.

It is found in the nucleus. Its function is as follows. BrlA, abaA and wetA are pivotal regulators of conidiophore development and conidium maturation. They act individually and together to regulate their own expression and that of numerous other sporulation-specific genes. Binds promoters of target genes at brlA response elements (BREs) containing the conserved sequence 5'-(C/A)(A/G)AGGG(G/A)-3'. Regulates genes involved in conidiogenesis. This is C2H2 type master regulator of conidiophore development brlA from Penicillium digitatum (strain PHI26 / CECT 20796) (Green mold).